The chain runs to 65 residues: MSQLKITQVRSTIGARWKQRESLRTLGLRRIRHSVIREDNAATRGLIAVVRHLVEVEPAQTGGKT.

The protein belongs to the universal ribosomal protein uL30 family. In terms of assembly, part of the 50S ribosomal subunit.

The chain is Large ribosomal subunit protein uL30 from Mycobacterium bovis (strain ATCC BAA-935 / AF2122/97).